Reading from the N-terminus, the 342-residue chain is N-acetyl-gamma-glutamyl-phosphate reductase (342 aa).

The active site involves C149.

It belongs to the NAGSA dehydrogenase family. Type 1 subfamily.

Its subcellular location is the cytoplasm. It catalyses the reaction N-acetyl-L-glutamate 5-semialdehyde + phosphate + NADP(+) = N-acetyl-L-glutamyl 5-phosphate + NADPH + H(+). It functions in the pathway amino-acid biosynthesis; L-arginine biosynthesis; N(2)-acetyl-L-ornithine from L-glutamate: step 3/4. Functionally, catalyzes the NADPH-dependent reduction of N-acetyl-5-glutamyl phosphate to yield N-acetyl-L-glutamate 5-semialdehyde. This is N-acetyl-gamma-glutamyl-phosphate reductase from Nitrosomonas eutropha (strain DSM 101675 / C91 / Nm57).